Here is a 115-residue protein sequence, read N- to C-terminus: Large ribosomal subunit protein uL22c (115 aa).

Belongs to the universal ribosomal protein uL22 family. In terms of assembly, part of the 50S ribosomal subunit.

It is found in the plastid. The protein localises to the chloroplast. Functionally, this protein binds specifically to 23S rRNA. In terms of biological role, the globular domain of the protein is located near the polypeptide exit tunnel on the outside of the subunit, while an extended beta-hairpin is found that lines the wall of the exit tunnel in the center of the 70S ribosome. This chain is Large ribosomal subunit protein uL22c (rpl22), found in Thalassiosira pseudonana (Marine diatom).